Reading from the N-terminus, the 383-residue chain is Cytochrome b (383 aa).

4 consecutive transmembrane segments (helical) span residues 34-54, 78-99, 114-134, and 179-199; these read FGSLLGLTLMIQILTGVFLMM, WLIRSFHTNGASIFFMFIFLHI, WNVGVIMLFLLMATAFMGYVL, and FTALHFLLPFIILALLITHLI. Positions 84 and 98 each coordinate heme b. 2 residues coordinate heme b: His183 and His197. Position 202 (His202) interacts with a ubiquinone. Helical transmembrane passes span 227–247, 289–309, 321–341, and 348–368; these read MKDVLGAVLAASMLLTLALYL, LGGVLAMFSSIFILLLIPFLH, LSQLLFWTLILNFLALTWIGG, and YILLGQITSLLYFITILILMP.

Belongs to the cytochrome b family. The cytochrome bc1 complex contains 3 respiratory subunits (MT-CYB, CYC1 and UQCRFS1), 2 core proteins (UQCRC1 and UQCRC2) and probably 6 low-molecular weight proteins. Requires heme b as cofactor.

The protein resides in the mitochondrion inner membrane. Its function is as follows. Component of the ubiquinol-cytochrome c reductase complex (complex III or cytochrome b-c1 complex) that is part of the mitochondrial respiratory chain. The b-c1 complex mediates electron transfer from ubiquinol to cytochrome c. Contributes to the generation of a proton gradient across the mitochondrial membrane that is then used for ATP synthesis. In Caiman crocodilus (Spectacled caiman), this protein is Cytochrome b (MT-CYB).